The primary structure comprises 144 residues: MGKVIQFPFGEEPEKKEEKELKTEPLTEEDFNQVIEVFKKDLKTLYPSQVKDILGVIGLGEKYGDEKFVVGLLMWEHYKHSHPLVSSFVAVLKGDKLEKISFLEAKNNYWDWKLMVKTYKDKFHTEELMRGLFELKERFEKGEI.

The interval 1–24 (MGKVIQFPFGEEPEKKEEKELKTE) is disordered. The segment covering 12 to 24 (EPEKKEEKELKTE) has biased composition (basic and acidic residues).

This is an uncharacterized protein from Aquifex aeolicus (strain VF5).